Consider the following 209-residue polypeptide: Imidazole glycerol phosphate synthase subunit HisH (209 aa).

A Glutamine amidotransferase type-1 domain is found at 1–205 (MIAIIDYGMG…QGVVEAWKSS (205 aa)). Cysteine 79 functions as the Nucleophile in the catalytic mechanism. Catalysis depends on residues histidine 180 and glutamate 182.

Heterodimer of HisH and HisF.

The protein localises to the cytoplasm. It carries out the reaction 5-[(5-phospho-1-deoxy-D-ribulos-1-ylimino)methylamino]-1-(5-phospho-beta-D-ribosyl)imidazole-4-carboxamide + L-glutamine = D-erythro-1-(imidazol-4-yl)glycerol 3-phosphate + 5-amino-1-(5-phospho-beta-D-ribosyl)imidazole-4-carboxamide + L-glutamate + H(+). It catalyses the reaction L-glutamine + H2O = L-glutamate + NH4(+). It participates in amino-acid biosynthesis; L-histidine biosynthesis; L-histidine from 5-phospho-alpha-D-ribose 1-diphosphate: step 5/9. In terms of biological role, IGPS catalyzes the conversion of PRFAR and glutamine to IGP, AICAR and glutamate. The HisH subunit catalyzes the hydrolysis of glutamine to glutamate and ammonia as part of the synthesis of IGP and AICAR. The resulting ammonia molecule is channeled to the active site of HisF. This Bacillus cereus (strain G9842) protein is Imidazole glycerol phosphate synthase subunit HisH.